The sequence spans 186 residues: MKERISQVIVVEGRDDTVNLKRYFDVETYETRGSAINDQDIERIQRLHQRHGVIVFTDPDFNGERIRRMIMTAIPTVQHAFLKRDEAVPKSKTKGRSLGIEHASYEDLKTALAQVTEQFEHESQFDISRSDLIRLGFLAGADSRKRREYLGETLRIGYSNGKQLLKRLELFGVTLAEVEEAMKSYE.

Positions 6-89 (SQVIVVEGRD…AFLKRDEAVP (84 aa)) constitute a Toprim domain. Mg(2+) contacts are provided by Glu12, Asp58, and Asp60.

Belongs to the ribonuclease M5 family. Requires Mg(2+) as cofactor.

The protein localises to the cytoplasm. The enzyme catalyses Endonucleolytic cleavage of RNA, removing 21 and 42 nucleotides, respectively, from the 5'- and 3'-termini of a 5S-rRNA precursor.. In terms of biological role, required for correct processing of both the 5' and 3' ends of 5S rRNA precursor. Cleaves both sides of a double-stranded region yielding mature 5S rRNA in one step. In Streptococcus pneumoniae (strain ATCC BAA-255 / R6), this protein is Ribonuclease M5.